Here is a 358-residue protein sequence, read N- to C-terminus: Aminomethyltransferase (358 aa).

This sequence belongs to the GcvT family. As to quaternary structure, the glycine cleavage system is composed of four proteins: P, T, L and H.

It carries out the reaction N(6)-[(R)-S(8)-aminomethyldihydrolipoyl]-L-lysyl-[protein] + (6S)-5,6,7,8-tetrahydrofolate = N(6)-[(R)-dihydrolipoyl]-L-lysyl-[protein] + (6R)-5,10-methylene-5,6,7,8-tetrahydrofolate + NH4(+). In terms of biological role, the glycine cleavage system catalyzes the degradation of glycine. The polypeptide is Aminomethyltransferase (Francisella tularensis subsp. tularensis (strain WY96-3418)).